A 506-amino-acid polypeptide reads, in one-letter code: ATP synthase subunit alpha, chloroplastic (506 aa).

172–179 contacts ATP; it reads GDRQTGKT.

This sequence belongs to the ATPase alpha/beta chains family. In terms of assembly, F-type ATPases have 2 components, CF(1) - the catalytic core - and CF(0) - the membrane proton channel. CF(1) has five subunits: alpha(3), beta(3), gamma(1), delta(1), epsilon(1). CF(0) has four main subunits: a, b, b' and c.

Its subcellular location is the plastid. It localises to the chloroplast thylakoid membrane. It catalyses the reaction ATP + H2O + 4 H(+)(in) = ADP + phosphate + 5 H(+)(out). In terms of biological role, produces ATP from ADP in the presence of a proton gradient across the membrane. The alpha chain is a regulatory subunit. The protein is ATP synthase subunit alpha, chloroplastic of Pleurastrum terricola (Filamentous green alga).